A 707-amino-acid polypeptide reads, in one-letter code: DNA ligase (707 aa).

Residues Asp48–Asp52, Ser97–Ile98, and Glu134 each bind NAD(+). Lys136 acts as the N6-AMP-lysine intermediate in catalysis. Arg157, Glu193, Lys320, and Lys344 together coordinate NAD(+). Residues Cys438, Cys441, Cys456, and Cys462 each contribute to the Zn(2+) site. One can recognise a BRCT domain in the interval Val621–Ala707.

Belongs to the NAD-dependent DNA ligase family. LigA subfamily. It depends on Mg(2+) as a cofactor. Requires Mn(2+) as cofactor.

The catalysed reaction is NAD(+) + (deoxyribonucleotide)n-3'-hydroxyl + 5'-phospho-(deoxyribonucleotide)m = (deoxyribonucleotide)n+m + AMP + beta-nicotinamide D-nucleotide.. Its function is as follows. DNA ligase that catalyzes the formation of phosphodiester linkages between 5'-phosphoryl and 3'-hydroxyl groups in double-stranded DNA using NAD as a coenzyme and as the energy source for the reaction. It is essential for DNA replication and repair of damaged DNA. The chain is DNA ligase from Polaromonas naphthalenivorans (strain CJ2).